Reading from the N-terminus, the 274-residue chain is Acetylaranotin bis-thiomethyltransferase (274 aa).

It belongs to the class I-like SAM-binding methyltransferase superfamily.

It functions in the pathway mycotoxin biosynthesis. In terms of biological role, acetylaranotin bis-thiomethyltransferase involved in the biosynthesis of acetylaranotin derivatives, members of the epipolythiodioxopiperazine (ETP) class of toxins characterized by a disulfide-bridged cyclic dipeptide. The first step of acetylaranotin biosynthesis is performed by the NRPS ataP which produces diketopiperazine cyclo-L-Phe-L-Phe via the condensation of 2 phenylalanines (L-Phe). The ataC domain of ataTC then catalyzes the formation of bishydroxylation of cyclo-L-Phe-L-Phe. The glutathione S-transferase domain ataG in ataIMG further catalyzes the conjugation of two glutathiones to the bishydroxylated intermediate. Next, the dipeptidase ataJ removes the Glu residues. The following step is performed by the carbon sulfur lyase domain ataI of ataIMG which may convert the bis-cysteinyl adduct to yield an epidithiol intermediate. The ataT domain from ataTC then catalyzes the oxidation of the free dithiols, followed by a cyclization step catalyzed by the cytochrome P450 ataF. AtaF probably acts as an epoxidase to promote a dual epoxidation formation at C8 and C9 along with C8' and C9', followed by the spontaneous nucleophilic attack of the amide nitrogens N10 and N10' to yield an intermediate with the pyrrolidine partial structure. The final steps of acetylaranotin biosynthesis involve the acetylation and ring rearrangement of an epitetrathiodiketopiperazine intermediate to produce acetylaranotin. AtaH probably catalyzes the acetylation of epitetrathiodiketopiperazine to produce a diacetate and ataY is responsible for the formation of the dihydrooxepin moiety that converts the diacetate intermediate to acetylaranotin via acetylapoaranotin. Both enzymes could function independently in the absence of the other. The acetylaranotin bis-thiomethyltransferase ataS located outside of acetylaranotin gene cluster is the main thiomethyltransferase responsible for converting acetylaranotin and its related intermediates to their methylated forms. In Aspergillus terreus (strain NIH 2624 / FGSC A1156), this protein is Acetylaranotin bis-thiomethyltransferase.